The sequence spans 247 residues: Probable cyclic nucleotide phosphodiesterase XBJ1_0953 (247 aa).

Residues D8, H10, D52, N82, H154, H192, and H194 each contribute to the Fe cation site. AMP-binding positions include H10, D52, and 82-83 (NH). H194 serves as a coordination point for AMP.

It belongs to the cyclic nucleotide phosphodiesterase class-III family. It depends on Fe(2+) as a cofactor.

The sequence is that of Probable cyclic nucleotide phosphodiesterase XBJ1_0953 from Xenorhabdus bovienii (strain SS-2004) (Xenorhabdus nematophila subsp. bovienii).